Here is a 214-residue protein sequence, read N- to C-terminus: Transcriptional regulatory protein MctR (214 aa).

Positions 8-124 (RVLLIDNHPL…EIVSAIETVA (117 aa)) constitute a Response regulatory domain. Asp-59 is subject to 4-aspartylphosphate. Residues 143–208 (VEEGSDPLTP…GLIRYALDHG (66 aa)) form the HTH luxR-type domain. Positions 167–186 (NKEIAETLGITSATAETHRK) form a DNA-binding region, H-T-H motif.

It localises to the cytoplasm. Its function is as follows. Member of the two-component regulatory system MctS/MctR, which activates mctP expression. The sequence is that of Transcriptional regulatory protein MctR from Rhizobium johnstonii (strain DSM 114642 / LMG 32736 / 3841) (Rhizobium leguminosarum bv. viciae).